The primary structure comprises 574 residues: Septation ring formation regulator EzrA (574 aa).

Residues 1–7 (MSSGIIL) lie on the Extracellular side of the membrane. Residues 8 to 26 (LIVAIVLLVIIAYLIGVII) form a helical membrane-spanning segment. Residues 27 to 574 (RKRNDSMIGT…YERTREHIRF (548 aa)) are Cytoplasmic-facing. 3 coiled-coil regions span residues 102-140 (NFIR…QEEK), 243-379 (RRLL…GQEI), and 459-520 (QLEA…SFEA).

This sequence belongs to the EzrA family.

The protein resides in the cell membrane. In terms of biological role, negative regulator of FtsZ ring formation; modulates the frequency and position of FtsZ ring formation. Inhibits FtsZ ring formation at polar sites. Interacts either with FtsZ or with one of its binding partners to promote depolymerization. This Streptococcus uberis (strain ATCC BAA-854 / 0140J) protein is Septation ring formation regulator EzrA.